The primary structure comprises 382 residues: Probable inactive dehydrogenase easA (382 aa).

FMN is bound by residues 25-27, Ala-60, Gln-102, and His-171; that span reads PMT. Residues His-171 and Asn-174 each coordinate substrate. FMN is bound by residues Lys-223, Gly-299, 324-325, and Arg-325; that span reads GR. Residue Tyr-352 coordinates substrate.

The protein belongs to the NADH:flavin oxidoreductase/NADH oxidase family.

Probable inactive dehydrogenase; part of the gene cluster that mediates the biosynthesis of fungal ergot alkaloid. DmaW catalyzes the first step of ergot alkaloid biosynthesis by condensing dimethylallyl diphosphate (DMAP) and tryptophan to form 4-dimethylallyl-L-tryptophan. The second step is catalyzed by the methyltransferase easF that methylates 4-dimethylallyl-L-tryptophan in the presence of S-adenosyl-L-methionine, resulting in the formation of 4-dimethylallyl-L-abrine. The catalase easC and the FAD-dependent oxidoreductase easE then transform 4-dimethylallyl-L-abrine to chanoclavine-I which is further oxidized by easD in the presence of NAD(+), resulting in the formation of chanoclavine-I aldehyde. Agroclavine dehydrogenase easG then mediates the conversion of chanoclavine-I aldehyde to agroclavine via a non-enzymatic adduct reaction: the substrate is an iminium intermediate that is formed spontaneously from chanoclavine-I aldehyde in the presence of glutathione. Further conversion of agroclavine to paspalic acid is a two-step process involving oxidation of agroclavine to elymoclavine and of elymoclavine to paspalic acid, the second step being performed by the elymoclavine oxidase cloA. However, cloA does not encode a functional enzyme indicating that C.fusiformis terminates its ergot alkaloid pathway at elymoclavine. This Claviceps fusiformis (Ergot fungus) protein is Probable inactive dehydrogenase easA.